The following is a 33-amino-acid chain: ELRLPEIARPVPEVLPARLPLPALPRNKMAKNQ.

Expressed by the skin glands.

It is found in the secreted. Its function is as follows. Non-cytotoxic peptide with immunosuppressive and insulinotropic effects. Induces an increased production of the anti-inflammatory cytokine IL-10 and inhibits production of the pro-inflammatory cytokines TNF-alpha and IL-1beta, when incubated with mouse peritoneal cells. Does not display growth-inhibitory activity against the Gram-positive S.epidermidis and Gram-negative E.coli bacteria and against the opportunistic yeast pathogen C.parapsilosis (MIC&gt;128 uM). In addition, it lacks cytotoxic activity against mouse erythrocytes (LC(50)&gt;500 uM) and A549 human non-small cell lung adenocarcinoma cells (LC(50)&gt;100 uM). Moderately stimulates insulin release from rat clonal beta-cells and mouse pancreatic islets. Functionally, non-cytotoxic peptide with immunosuppressive but without insulinotropic effects. Inhibits production of the pro-inflammatory cytokines TNF-alpha, but has no effect on IL-10 and IL-1beta production, when incubated with mouse peritoneal cells. Has no activity of stimulation of insulin release. The protein is Rhinophrynin-33 of Rhinophrynus dorsalis (Mexican burrowing toad).